The primary structure comprises 312 residues: D-alanine--D-alanine ligase (312 aa).

Residues 103 to 303 (KQQLVPHGIR…YADLVQAIVD (201 aa)) enclose the ATP-grasp domain. 130-186 (MPRPYVLKPVNEGSSVGVAIIKERDNHGVPIHRDSHGPWQTFATLLAEPFIRGRELT) contributes to the ATP binding site. Positions 254, 270, and 272 each coordinate Mg(2+).

It belongs to the D-alanine--D-alanine ligase family. The cofactor is Mg(2+). Mn(2+) serves as cofactor.

It is found in the cytoplasm. It carries out the reaction 2 D-alanine + ATP = D-alanyl-D-alanine + ADP + phosphate + H(+). Its pathway is cell wall biogenesis; peptidoglycan biosynthesis. Cell wall formation. The sequence is that of D-alanine--D-alanine ligase from Rhizorhabdus wittichii (strain DSM 6014 / CCUG 31198 / JCM 15750 / NBRC 105917 / EY 4224 / RW1) (Sphingomonas wittichii).